We begin with the raw amino-acid sequence, 354 residues long: Vanillate O-demethylase oxygenase subunit (354 aa).

The 101-residue stretch at 7–107 folds into the Rieske domain; sequence WYVACTPDEI…VEERYGFIWV (101 aa). C47, H49, C66, and H69 together coordinate [2Fe-2S] cluster.

Belongs to the bacterial ring-hydroxylating dioxygenase alpha subunit family. This demethylase system consists of two proteins: an oxygenase and an oxygenase reductase. It depends on [2Fe-2S] cluster as a cofactor. Requires Fe cation as cofactor.

It carries out the reaction vanillate + NADH + O2 + H(+) = 3,4-dihydroxybenzoate + formaldehyde + NAD(+) + H2O. It participates in xenobiotic degradation; vanillyl-alcohol degradation. This Pseudomonas sp. (strain HR199 / DSM 7063) protein is Vanillate O-demethylase oxygenase subunit (vanA).